The following is a 224-amino-acid chain: BOS complex subunit TMEM147 (224 aa).

The chain crosses the membrane as a helical span at residues 1 to 21 (MTLFHFGNCFALAYFPYFITY). Residues 22 to 34 (KCSGLSEYNAFWK) are Cytoplasmic-facing. The chain crosses the membrane as a helical span at residues 35–58 (CVQAGVTYLFVQLCKMLFLATFFP). Residues 59–66 (TWEGGIYD) are Lumenal-facing. A helical transmembrane segment spans residues 67 to 88 (FIGEFMKASVDVADLIGLNLVM). The Cytoplasmic portion of the chain corresponds to 89-98 (SRNAGKGEYK). Residues 99-124 (IMVAALGWATAELIMSRCIPLWVGAR) traverse the membrane as a helical segment. Topologically, residues 125-129 (GIEFD) are lumenal. The chain crosses the membrane as a helical span at residues 130-155 (WKYIQMSIDSNISLVHYIVASAQVWM). Residues 156–164 (ITRYDLYHT) lie on the Cytoplasmic side of the membrane. A helical transmembrane segment spans residues 165 to 187 (FRPAVLLLMFLSVYKAFVMETFV). The Lumenal segment spans residues 188 to 194 (HLCSLGS). The chain crosses the membrane as a helical span at residues 195–216 (WTALLARAVVTGLLALSTLALY). The Cytoplasmic portion of the chain corresponds to 217–224 (VAVVNVHS).

It belongs to the TMEM147 family. Component of the back of Sec61 (BOS) complex, composed of NCLN/Nicalin, NOMO1 and TMEM147. The BOS complex is part of the multi-pass translocon (MPT) complex, composed of three subcomplexes, the GEL complex (composed of RAB5IF/OPTI and TMCO1), the BOS complex (composed of NCLN/Nicalin, NOMO1 and TMEM147) and the PAT complex (composed of WDR83OS/Asterix and CCDC47). The MPT complex associates with the SEC61 complex. Interacts with CHRM3, CHRM1 and AVPR2. Interacts with LBR; promoting LBR localization to the nucleus inner membrane. Interacts with DHCR7.

It localises to the endoplasmic reticulum membrane. It is found in the nucleus membrane. Its subcellular location is the cell membrane. Component of the multi-pass translocon (MPT) complex that mediates insertion of multi-pass membrane proteins into the lipid bilayer of membranes. The MPT complex takes over after the SEC61 complex: following membrane insertion of the first few transmembrane segments of proteins by the SEC61 complex, the MPT complex occludes the lateral gate of the SEC61 complex to promote insertion of subsequent transmembrane regions. Also acts as a negative regulator of CHRM3 function, most likely by interfering with its trafficking to the cell membrane. Negatively regulates CHRM3-mediated calcium mobilization and activation of RPS6KA1/p90RSK activity. Regulates LBR localization to the nucleus inner membrane. The polypeptide is BOS complex subunit TMEM147 (Canis lupus familiaris (Dog)).